A 1056-amino-acid polypeptide reads, in one-letter code: MASQPNSSAKKKEEKGKNIQVVVRCRPFNLAERKASAHSIVECDPVRKEVSVRTGGLADKSSRKTYTFDMVFGASTKQIDVYRSVVCPILDEVIMGYNCTIFAYGQTGTGKTFTMEGERSPNEEYTWEEDPLAGIIPRTLHQIFEKLTDNGTEFSVKVSLLEIYNEELFDLLNPSSDVSERLQMFDDPRNKRGVIIKGLEEITVHNKDEVYQILEKGAAKRTTAATLMNAYSSRSHSVFSVTIHMKETTIDGEELVKIGKLNLVDLAGSENIGRSGAVDKRAREAGNINQSLLTLGRVITALVERTPHVPYRESKLTRILQDSLGGRTRTSIIATISPASLNLEETLSTLEYAHRAKNILNKPEVNQKLTKKALIKEYTEEIERLKRDLAAAREKNGVYISEENFRVMSGKLTVQEEQIVELIEKIGAVEEELNRVTELFMDNKNELDQCKSDLQNKTQELETTQKHLQETKLQLVKEEYITSALESTEEKLHDAASKLLNTVEETTKDVSGLHSKLDRKKAVDQHNAEAQDIFGKNLNSLFNNMEELIKDGSSKQKAMLEVHKTLFGNLLSSSVSALDTITTVALGSLTSIPENVSTHVSQIFNMILKEQSLAAESKTVLQELINVLKTDLLSSLEMILSPTVVSILKINSQLKHIFKTSLTVADKIEDQKKELDGFLSILCNNLHELQENTICSLVESQKQCGNLTEDLKTIKQTHSQELCKLMNLWTERFCALEEKCENIQKPLSSVQENIQQKSKDIVNKMTFHSQKFCADSDGFSQELRNFNQEGTKLVEESVKHSDKLNGNLEKISQETEQRCESLNTRTVYFSEQWVSSLNEREQELHNLLEVVSQCCEASSSDITEKSDGRKAAHEKQHNIFLDQMTIDEDKLIAQNLELNETIKIGLTKLNCFLEQDLKLDIPTGTTPQRKSYLYPSTLVRTEPREHLLDQLKRKQPELLMMLNCSENNKEETIPDVDVEEAVLGQYTEEPLSQEPSVDAGVDCSSIGGVPFFQHKKSHGKDKENRGINTLERSKVEETTEHLVTKSRLPLRAQINL.

In terms of domain architecture, Kinesin motor spans 18-359; that stretch reads NIQVVVRCRP…LEYAHRAKNI (342 aa). ATP is bound at residue 105–112; sequence GQTGTGKT. Residue lysine 146 is modified to N6-acetyllysine. Coiled coils occupy residues 364–480 and 736–763; these read EVNQ…KEEY and LEEK…DIVN. Threonine 458 carries the post-translational modification Phosphothreonine. Residue lysine 477 forms a Glycyl lysine isopeptide (Lys-Gly) (interchain with G-Cter in SUMO2) linkage. Threonine 925 carries the phosphothreonine modification. Threonine 926 bears the Phosphothreonine; by CDK1 mark. The residue at position 1033 (serine 1033) is a Phosphoserine; by NEK6. Lysine 1034 is covalently cross-linked (Glycyl lysine isopeptide (Lys-Gly) (interchain with G-Cter in ubiquitin)).

This sequence belongs to the TRAFAC class myosin-kinesin ATPase superfamily. Kinesin family. BimC subfamily. Interacts with the thyroid hormone receptor in the presence of thyroid hormone. Component of a large chromatin remodeling complex, at least composed of MYSM1, PCAF, RBM10 and KIF11/TRIP5. Interacts (via C-terminus) with the kinase NEK6 in both interphase and mitosis. Interacts with RARRES1 and AGBL2. Interacts with TPX2. Post-translationally, phosphorylated exclusively on serine during S phase, but on both serine and Thr-926 during mitosis, so controlling the association of KIF11 with the spindle apparatus (probably during early prophase). A subset of this protein primarily localized at the spindle pole is phosphorylated by NEK6 during mitosis; phosphorylation is required for mitotic function. In terms of processing, ubiquitinated at Lys-1034 by UHRF1 via 'Lys-63'-linked ubiquitin chains, leading to interaction with spindle assembly factor TPX2, thereby ensuring accurate distribution to the spindles during metaphase.

It localises to the cytoplasm. Its subcellular location is the cytoskeleton. The protein resides in the spindle pole. Functionally, motor protein required for establishing a bipolar spindle and thus contributing to chromosome congression during mitosis. Required in non-mitotic cells for transport of secretory proteins from the Golgi complex to the cell surface. In Homo sapiens (Human), this protein is Kinesin-like protein KIF11 (KIF11).